Consider the following 145-residue polypeptide: Lysozyme-like protein 4 (145 aa).

An N-terminal signal peptide occupies residues 1–19 (MQLYLVLLLISYLLTPIGA). The 126-residue stretch at 20–145 (SILGRCVVAK…LDRWLDGCEL (126 aa)) folds into the C-type lysozyme domain. Intrachain disulfides connect cysteine 25/cysteine 143, cysteine 49/cysteine 130, cysteine 84/cysteine 95, and cysteine 91/cysteine 109. Residue glutamate 54 is part of the active site.

Belongs to the glycosyl hydrolase 22 family. Monomer. As to expression, expressed in the brain, lung, ovary, uterus and testis. In testis expressed in the germinal epithelium and on the maturing spermatozoa (at protein level).

It localises to the secreted. It is found in the cytoplasmic vesicle. The protein resides in the secretory vesicle. Its subcellular location is the acrosome. The protein localises to the cell projection. It localises to the cilium. It is found in the flagellum. May be involved in fertilization. Has no detectable bacteriolytic and lysozyme activities in vitro. This chain is Lysozyme-like protein 4 (Lyzl4), found in Rattus norvegicus (Rat).